Here is a 701-residue protein sequence, read N- to C-terminus: Elongation factor G (701 aa).

The region spanning 11–287 (TKVRNIGIMA…AVIDYLPSPL (277 aa)) is the tr-type G domain. GTP-binding positions include 20 to 27 (AHIDAGKT), 84 to 88 (DTPGH), and 138 to 141 (NKMD).

Belongs to the TRAFAC class translation factor GTPase superfamily. Classic translation factor GTPase family. EF-G/EF-2 subfamily.

The protein localises to the cytoplasm. Its function is as follows. Catalyzes the GTP-dependent ribosomal translocation step during translation elongation. During this step, the ribosome changes from the pre-translocational (PRE) to the post-translocational (POST) state as the newly formed A-site-bound peptidyl-tRNA and P-site-bound deacylated tRNA move to the P and E sites, respectively. Catalyzes the coordinated movement of the two tRNA molecules, the mRNA and conformational changes in the ribosome. The sequence is that of Elongation factor G from Mycobacterium leprae (strain Br4923).